The following is a 320-amino-acid chain: Phosphate acyltransferase (320 aa).

The protein belongs to the PlsX family. In terms of assembly, homodimer. Probably interacts with PlsY.

The protein localises to the cytoplasm. It catalyses the reaction a fatty acyl-[ACP] + phosphate = an acyl phosphate + holo-[ACP]. Its pathway is lipid metabolism; phospholipid metabolism. Catalyzes the reversible formation of acyl-phosphate (acyl-PO(4)) from acyl-[acyl-carrier-protein] (acyl-ACP). This enzyme utilizes acyl-ACP as fatty acyl donor, but not acyl-CoA. This chain is Phosphate acyltransferase, found in Chlamydia pneumoniae (Chlamydophila pneumoniae).